Here is a 464-residue protein sequence, read N- to C-terminus: Glutamate--tRNA ligase 1 (464 aa).

The 'HIGH' region signature appears at 8-18 (PSPTGHLHVGG). The short motif at 231–235 (PLSKR) is the 'KMSKS' region element. K234 is a binding site for ATP.

This sequence belongs to the class-I aminoacyl-tRNA synthetase family. Glutamate--tRNA ligase type 1 subfamily. In terms of assembly, monomer.

Its subcellular location is the cytoplasm. It catalyses the reaction tRNA(Glu) + L-glutamate + ATP = L-glutamyl-tRNA(Glu) + AMP + diphosphate. Functionally, catalyzes the attachment of glutamate to tRNA(Glu) in a two-step reaction: glutamate is first activated by ATP to form Glu-AMP and then transferred to the acceptor end of tRNA(Glu). The protein is Glutamate--tRNA ligase 1 of Thermotoga petrophila (strain ATCC BAA-488 / DSM 13995 / JCM 10881 / RKU-1).